A 403-amino-acid chain; its full sequence is 8-amino-7-oxononanoate synthase (403 aa).

Residue R30 coordinates substrate. Pyridoxal 5'-phosphate is bound at residue 121 to 122 (GY). H146 provides a ligand contact to substrate. Residues S192, H220, and T248 each coordinate pyridoxal 5'-phosphate. K251 is modified (N6-(pyridoxal phosphate)lysine). T367 contacts substrate.

The protein belongs to the class-II pyridoxal-phosphate-dependent aminotransferase family. BioF subfamily. Homodimer. The cofactor is pyridoxal 5'-phosphate.

It catalyses the reaction 6-carboxyhexanoyl-[ACP] + L-alanine + H(+) = (8S)-8-amino-7-oxononanoate + holo-[ACP] + CO2. It participates in cofactor biosynthesis; biotin biosynthesis. Functionally, catalyzes the decarboxylative condensation of pimeloyl-[acyl-carrier protein] and L-alanine to produce 8-amino-7-oxononanoate (AON), [acyl-carrier protein], and carbon dioxide. In Burkholderia vietnamiensis (strain G4 / LMG 22486) (Burkholderia cepacia (strain R1808)), this protein is 8-amino-7-oxononanoate synthase.